Consider the following 227-residue polypeptide: Ribosome-recycling factor, chloroplastic (227 aa).

Residues 1–34 (WTAAANYVKIKVGTGKFARKTVVLSQKRTGTLKC) constitute a chloroplast transit peptide. Residues 167 to 212 (KVALRNIRRDAIKSYDKLEKEKKLSEDNVKDLSSDLQKVIDEYIKK) are a coiled coil.

This sequence belongs to the RRF family.

The protein resides in the plastid. Its subcellular location is the chloroplast. Responsible for the release of ribosomes from messenger RNA at the termination of chloroplastic protein biosynthesis. This is Ribosome-recycling factor, chloroplastic (RRF) from Daucus carota (Wild carrot).